Consider the following 83-residue polypeptide: Sulfur carrier protein TusA (83 aa).

Cys-19 serves as the catalytic Cysteine persulfide intermediate.

This sequence belongs to the sulfur carrier protein TusA family.

Its subcellular location is the cytoplasm. Its function is as follows. Sulfur carrier protein which probably makes part of a sulfur-relay system. The chain is Sulfur carrier protein TusA from Aliivibrio salmonicida (strain LFI1238) (Vibrio salmonicida (strain LFI1238)).